Reading from the N-terminus, the 673-residue chain is Putative potassium transport system protein Kup 1 (673 aa).

The next 13 helical transmembrane spans lie at Gly-14–Tyr-34, Leu-58–Leu-78, Trp-101–Pro-121, Leu-147–Gly-167, Phe-175–Phe-195, Gly-196–Pro-216, Ala-220–Ser-240, Val-252–Leu-272, Leu-294–Ile-314, Leu-345–Phe-365, Ala-374–Leu-394, Val-403–Ser-423, and Phe-427–Ile-447.

This sequence belongs to the HAK/KUP transporter (TC 2.A.72) family.

The protein localises to the cell membrane. It catalyses the reaction K(+)(in) + H(+)(in) = K(+)(out) + H(+)(out). Functionally, transport of potassium into the cell. Likely operates as a K(+):H(+) symporter. This chain is Putative potassium transport system protein Kup 1, found in Lactococcus lactis subsp. cremoris (strain MG1363).